The sequence spans 215 residues: MSENAQLNGLCDRFRGFYPVVIDVETAGFNAKTDALLEIAAITLKMDEHGWLMPDETLHFHVEPFEGANLQPEALAFNGINPHDPQRGAVSEYDALHAIFKMVRKGMKESDCSRAIMVAHNATFDHSFTMTAAERAGLKRNPFHPFVTFDTAALSGLALGQTVLSKACIAAGMPFDGAQAHSALYDTEQTAQLFCEIVNRWKRLGGWPLPVATPE.

The Exonuclease domain occupies 20–194 (VVIDVETAGF…YDTEQTAQLF (175 aa)). The Mg(2+) site is built by D23, E25, H181, and D186. H181 (proton donor/acceptor) is an active-site residue.

This sequence belongs to the RNase T family. Homodimer. Mg(2+) is required as a cofactor.

Its function is as follows. Trims short 3' overhangs of a variety of RNA species, leaving a one or two nucleotide 3' overhang. Responsible for the end-turnover of tRNA: specifically removes the terminal AMP residue from uncharged tRNA (tRNA-C-C-A). Also appears to be involved in tRNA biosynthesis. The polypeptide is Ribonuclease T (Klebsiella pneumoniae subsp. pneumoniae (strain ATCC 700721 / MGH 78578)).